Reading from the N-terminus, the 525-residue chain is Bifunctional purine biosynthesis protein PurH (525 aa).

One can recognise an MGS-like domain in the interval 1–147; it reads MTKIERALIS…KNWAHVAIVT (147 aa).

The protein belongs to the PurH family.

The enzyme catalyses (6R)-10-formyltetrahydrofolate + 5-amino-1-(5-phospho-beta-D-ribosyl)imidazole-4-carboxamide = 5-formamido-1-(5-phospho-D-ribosyl)imidazole-4-carboxamide + (6S)-5,6,7,8-tetrahydrofolate. The catalysed reaction is IMP + H2O = 5-formamido-1-(5-phospho-D-ribosyl)imidazole-4-carboxamide. It functions in the pathway purine metabolism; IMP biosynthesis via de novo pathway; 5-formamido-1-(5-phospho-D-ribosyl)imidazole-4-carboxamide from 5-amino-1-(5-phospho-D-ribosyl)imidazole-4-carboxamide (10-formyl THF route): step 1/1. The protein operates within purine metabolism; IMP biosynthesis via de novo pathway; IMP from 5-formamido-1-(5-phospho-D-ribosyl)imidazole-4-carboxamide: step 1/1. This Chromobacterium violaceum (strain ATCC 12472 / DSM 30191 / JCM 1249 / CCUG 213 / NBRC 12614 / NCIMB 9131 / NCTC 9757 / MK) protein is Bifunctional purine biosynthesis protein PurH.